We begin with the raw amino-acid sequence, 844 residues long: Patched-related protein 9 (844 aa).

The 158-residue stretch at 264-421 (LIPWMPWTSL…VTFFNAVMSL (158 aa)) folds into the SSD domain.

Belongs to the patched family.

The protein is Patched-related protein 9 (ptr-9) of Caenorhabditis elegans.